Consider the following 223-residue polypeptide: V-type ATP synthase subunit D (223 aa).

The tract at residues 203–223 (AREAEEEGGRPNPQVEIGAGL) is disordered.

It belongs to the V-ATPase D subunit family.

Produces ATP from ADP in the presence of a proton gradient across the membrane. This Thermus thermophilus (strain ATCC BAA-163 / DSM 7039 / HB27) protein is V-type ATP synthase subunit D.